Reading from the N-terminus, the 376-residue chain is MRIYDPFRKKWIEEEIETPFPSKGLVATFPFVDLHVHVRLNGGEDYSSLEEASLVGGFFKVVVQPNTKPLIDSKEVLERHLDLSKNRAVEFLFAVSPFGSIEAEGERVVGFSTDGIEYDYPTLVETMKKKKKALWFDHSQMYEVDGIFYEGAPLPFQKRPRSNEAIAIARTVLTGLEYGFERFHIQHVTTKYSVEVISFLKNLAKVSCEVTPHHLFFCYEDIKNTNFKINPPLGSPEDRRALIEAVKKDVIDVLATDHAPHHEKPDDFLTAPYGSTSIEIAFPAYYTALGDLELVVKKLTKKPLEVLGVEARLTEDTLVFIDPEAEFIVDAKKFKSKGKNSMFDGVRLKGKVVALKLKGRWVMIDGEVIADQKEND.

The Zn(2+) site is built by H35 and H37. Substrate contacts are provided by residues H37–R39 and N66. Zn(2+)-binding residues include D114, H138, and H187. Residue N230 coordinates substrate. D257 is a Zn(2+) binding site. Residue D257 is part of the active site. Substrate is bound by residues H261 and Y273 to G274.

This sequence belongs to the metallo-dependent hydrolases superfamily. DHOase family. Class I DHOase subfamily. Zn(2+) is required as a cofactor.

It carries out the reaction (S)-dihydroorotate + H2O = N-carbamoyl-L-aspartate + H(+). Its pathway is pyrimidine metabolism; UMP biosynthesis via de novo pathway; (S)-dihydroorotate from bicarbonate: step 3/3. Its function is as follows. Catalyzes the reversible cyclization of carbamoyl aspartate to dihydroorotate. The chain is Putative dihydroorotase (pyrC) from Thermotoga maritima (strain ATCC 43589 / DSM 3109 / JCM 10099 / NBRC 100826 / MSB8).